A 520-amino-acid chain; its full sequence is D-aminopeptidase (520 aa).

Residue S62 is the Nucleophile of the active site. K65 functions as the Proton donor/acceptor in the catalytic mechanism. Residues 477–487 (QRSMDAPSPGE) form an important for specificity region. D481 serves as a coordination point for substrate.

The protein belongs to the peptidase S12 family. Homodimer.

It carries out the reaction Release of an N-terminal D-amino acid from a peptide, Xaa-|-Yaa-, in which Xaa is preferably D-Ala, D-Ser or D-Thr. D-amino acid amides and methyl esters also are hydrolyzed, as is glycine amide.. With respect to regulation, inhibited by beta-lactam compounds such as 6-aminopenicillic acid, 7-aminocephalosporanic acid, benzylpenicillin and ampicillin. Inhibited by p-chloromercuribenzoate. Its function is as follows. Hydrolyzes N-terminal residues in D-amino acid-containing peptides. This is D-aminopeptidase (dap) from Brucella anthropi (Ochrobactrum anthropi).